Here is a 234-residue protein sequence, read N- to C-terminus: Probable plastid-lipid-associated protein 5, chloroplastic (234 aa).

The transit peptide at 1-45 directs the protein to the chloroplast; the sequence is MALPWCLKTGVLTSPAAGFNHPSDSGFAVPTKLLSIRKGDRERLR.

It belongs to the PAP/fibrillin family.

The protein localises to the plastid. It localises to the chloroplast thylakoid. In Arabidopsis thaliana (Mouse-ear cress), this protein is Probable plastid-lipid-associated protein 5, chloroplastic (PAP5).